The sequence spans 980 residues: Protein translocase subunit SecA (980 aa).

Residues glutamine 109, 127-131 (GEGKT), and aspartate 529 contribute to the ATP site. The disordered stretch occupies residues 954 to 980 (QKIGRNDPCPCGSGKKYKHCHGKDNPQ). Residues cysteine 962, cysteine 964, cysteine 973, and histidine 974 each coordinate Zn(2+).

This sequence belongs to the SecA family. As to quaternary structure, monomer and homodimer. Part of the essential Sec protein translocation apparatus which comprises SecA, SecYEG and auxiliary proteins SecDF. Other proteins may also be involved. Requires Zn(2+) as cofactor.

The protein localises to the cell inner membrane. It is found in the cytoplasm. It catalyses the reaction ATP + H2O + cellular proteinSide 1 = ADP + phosphate + cellular proteinSide 2.. Part of the Sec protein translocase complex. Interacts with the SecYEG preprotein conducting channel. Has a central role in coupling the hydrolysis of ATP to the transfer of proteins into and across the cell membrane, serving as an ATP-driven molecular motor driving the stepwise translocation of polypeptide chains across the membrane. This is Protein translocase subunit SecA from Brachyspira hyodysenteriae (strain ATCC 49526 / WA1).